The sequence spans 299 residues: GTP cyclohydrolase FolE2 (299 aa).

Belongs to the GTP cyclohydrolase IV family.

It catalyses the reaction GTP + H2O = 7,8-dihydroneopterin 3'-triphosphate + formate + H(+). It participates in cofactor biosynthesis; 7,8-dihydroneopterin triphosphate biosynthesis; 7,8-dihydroneopterin triphosphate from GTP: step 1/1. Its function is as follows. Converts GTP to 7,8-dihydroneopterin triphosphate. This is GTP cyclohydrolase FolE2 from Klebsiella pneumoniae.